The sequence spans 218 residues: Monomethylamine corrinoid protein 1 (218 aa).

The 91-residue stretch at 1-91 (MANQEIFDKL…ELEKTKVEGE (91 aa)) folds into the B12-binding N-terminal domain. A B12-binding domain is found at 94-218 (TGLAITFVAE…AAKVALNIMK (125 aa)). Histidine 107 contributes to the methylcob(III)alamin binding site.

This sequence belongs to the methylamine corrinoid protein family. In terms of assembly, can form a complex with MtmB.

It functions in the pathway one-carbon metabolism; methanogenesis from methylamine. In terms of biological role, acts as a methyl group carrier between MtmB and MtbA. The polypeptide is Monomethylamine corrinoid protein 1 (mtmC1) (Methanosarcina mazei (strain ATCC BAA-159 / DSM 3647 / Goe1 / Go1 / JCM 11833 / OCM 88) (Methanosarcina frisia)).